A 61-amino-acid polypeptide reads, in one-letter code: MDPNCSCATGDSCACASTCKCKECKCTSCKKSCCSCCPVGCAKCAQGCICKGASDKCSCCA.

At methionine 1 the chain carries N-acetylmethionine. Residues methionine 1–cysteine 29 form a beta region. Residues cysteine 5, cysteine 7, cysteine 13, cysteine 15, cysteine 19, cysteine 21, cysteine 24, cysteine 26, cysteine 29, cysteine 33, cysteine 34, cysteine 36, cysteine 37, cysteine 41, cysteine 44, cysteine 48, cysteine 50, and cysteine 57 each contribute to the a divalent metal cation site. Residues lysine 30–alanine 61 form an alpha region. At serine 58 the chain carries Phosphoserine. Positions 59 and 60 each coordinate a divalent metal cation.

This sequence belongs to the metallothionein superfamily. Type 1 family.

Functionally, metallothioneins have a high content of cysteine residues that bind various heavy metals; these proteins are transcriptionally regulated by both heavy metals and glucocorticoids. This isoform may play a role in regulating the transport, accumulation, and compartmentation of zinc in the hippocampus. The chain is Metallothionein-I, hippocampal from Bos taurus (Bovine).